A 157-amino-acid polypeptide reads, in one-letter code: Protein Smg (157 aa).

This sequence belongs to the Smg family.

The chain is Protein Smg from Escherichia coli O6:H1 (strain CFT073 / ATCC 700928 / UPEC).